The primary structure comprises 288 residues: Proteasome assembly chaperone 1 (288 aa).

Residues 1–37 (MAATFFGEVVKAPCRAGTEDEEEEDEGRRETPEDREV) form a disordered region. Residue Ala2 is modified to N-acetylalanine. Residue Thr18 is modified to Phosphothreonine. Positions 26–37 (EGRRETPEDREV) are enriched in basic and acidic residues. Thr54 carries the phosphothreonine modification. At Ser180 the chain carries Phosphoserine. Lys264 carries the N6-acetyllysine modification.

The protein belongs to the PSMG1 family. Forms a heterodimer with PSMG2. The PSMG1-PSMG2 heterodimer interacts directly with the PSMA5 and PSMA7 proteasome alpha subunits. Post-translationally, degraded by the proteasome upon completion of 20S proteasome maturation.

Its subcellular location is the cytoplasm. It is found in the endoplasmic reticulum. Chaperone protein which promotes assembly of the 20S proteasome as part of a heterodimer with PSMG2. The PSMG1-PSMG2 heterodimer binds to the PSMA5 and PSMA7 proteasome subunits, promotes assembly of the proteasome alpha subunits into the heteroheptameric alpha ring and prevents alpha ring dimerization. The protein is Proteasome assembly chaperone 1 (PSMG1) of Callithrix jacchus (White-tufted-ear marmoset).